The sequence spans 567 residues: Formate--tetrahydrofolate ligase (567 aa).

Residue threonine 76 to threonine 83 coordinates ATP.

This sequence belongs to the formate--tetrahydrofolate ligase family.

The catalysed reaction is (6S)-5,6,7,8-tetrahydrofolate + formate + ATP = (6R)-10-formyltetrahydrofolate + ADP + phosphate. It participates in one-carbon metabolism; tetrahydrofolate interconversion. This is Formate--tetrahydrofolate ligase from Sinorhizobium medicae (strain WSM419) (Ensifer medicae).